The sequence spans 122 residues: Small ribosomal subunit protein bS16 (122 aa).

The segment at 81 to 122 (GLMKRDAKNNPKKGEPGEKAKERAKERAEKAAAGSTEDAAAE) is disordered. The span at 83 to 110 (MKRDAKNNPKKGEPGEKAKERAKERAEK) shows a compositional bias: basic and acidic residues. Residues 111 to 122 (AAAGSTEDAAAE) are compositionally biased toward low complexity.

This sequence belongs to the bacterial ribosomal protein bS16 family.

In Xanthobacter autotrophicus (strain ATCC BAA-1158 / Py2), this protein is Small ribosomal subunit protein bS16.